The following is a 317-amino-acid chain: Serpentine receptor class delta-44 (317 aa).

Transmembrane regions (helical) follow at residues 5-25 (ILSV…IILI), 90-110 (MFHI…LTTF), 130-150 (ILFI…LVII), 185-205 (RVNG…CLLL), 235-255 (IFGH…SLIT), and 264-284 (FFIF…TMYF).

It belongs to the nematode receptor-like protein srd family.

It is found in the membrane. In Caenorhabditis elegans, this protein is Serpentine receptor class delta-44 (srd-44).